The chain runs to 614 residues: Beta-glucosidase 33 (614 aa).

The N-terminal stretch at 1 to 26 is a signal peptide; sequence MATATLTLFLGLLALTSTILSFNADA. A beta-D-glucoside contacts are provided by residues Gln-113, His-217, and 262-263; that span reads NE. Residue Glu-263 is the Proton donor of the active site. Cys-282 and Cys-290 form a disulfide bridge. The N-linked (GlcNAc...) asparagine glycan is linked to Asn-344. Tyr-407 contacts a beta-D-glucoside. N-linked (GlcNAc...) asparagine glycosylation is found at Asn-419, Asn-432, and Asn-439. Glu-479 contributes to the a beta-D-glucoside binding site. Glu-479 functions as the Nucleophile in the catalytic mechanism. Asn-491 carries N-linked (GlcNAc...) asparagine glycosylation. A beta-D-glucoside contacts are provided by residues Trp-529, 536–537, and Phe-545; that span reads EW.

It belongs to the glycosyl hydrolase 1 family.

The enzyme catalyses Hydrolysis of terminal, non-reducing beta-D-glucosyl residues with release of beta-D-glucose.. This Arabidopsis thaliana (Mouse-ear cress) protein is Beta-glucosidase 33.